Reading from the N-terminus, the 459-residue chain is Nuclear hormone receptor family member nhr-11 (459 aa).

Positions glycine 2–serine 81 form a DNA-binding region, nuclear receptor. 2 NR C4-type zinc fingers span residues cysteine 5–cysteine 26 and cysteine 42–cysteine 69. Disordered regions lie at residues arginine 90–aspartate 119 and aspartate 134–aspartate 162. The span at asparagine 97–proline 115 shows a compositional bias: low complexity. Positions glutamate 188–glutamine 458 constitute an NR LBD domain.

The protein belongs to the nuclear hormone receptor family.

It is found in the nucleus. In terms of biological role, orphan nuclear receptor. This Caenorhabditis elegans protein is Nuclear hormone receptor family member nhr-11 (nhr-11).